A 340-amino-acid chain; its full sequence is DnaJ homolog subfamily C member 22 (340 aa).

Residues 1–50 (MGKSLLAAYGLWALGGPLGLYHIYLGRDSHALLWMLTLGGFGMGWMWDFW) form the TM2 domain. 7 helical membrane-spanning segments follow: residues 5–25 (LLAA…HIYL), 30–50 (HALL…WDFW), 81–101 (FIGQ…GLSF), 105–125 (FHMV…ATVG), 135–155 (LIAA…MIPI), 186–206 (IGLV…LNTS), and 212–232 (VAGS…ISAL). One can recognise a J domain in the interval 278–340 (MACKVLGVNF…LMRLRKSKTL (63 aa)).

The protein localises to the membrane. In terms of biological role, may function as a co-chaperone. This Xenopus tropicalis (Western clawed frog) protein is DnaJ homolog subfamily C member 22 (dnajc22).